A 201-amino-acid polypeptide reads, in one-letter code: Recombination protein RecR (201 aa).

A C4-type zinc finger spans residues 60 to 75 (CKTCGNIDTQNPCTVC). Positions 83–178 (SIIVVVADVA…KVTRLAHGVP (96 aa)) constitute a Toprim domain.

This sequence belongs to the RecR family.

In terms of biological role, may play a role in DNA repair. It seems to be involved in an RecBC-independent recombinational process of DNA repair. It may act with RecF and RecO. This chain is Recombination protein RecR, found in Rhodopseudomonas palustris (strain HaA2).